The sequence spans 426 residues: Histidine--tRNA ligase (426 aa).

Belongs to the class-II aminoacyl-tRNA synthetase family.

Its subcellular location is the cytoplasm. It catalyses the reaction tRNA(His) + L-histidine + ATP = L-histidyl-tRNA(His) + AMP + diphosphate + H(+). This Saccharolobus islandicus (strain L.S.2.15 / Lassen #1) (Sulfolobus islandicus) protein is Histidine--tRNA ligase.